Here is a 336-residue protein sequence, read N- to C-terminus: Ferredoxin--NADP reductase (336 aa).

FAD is bound by residues threonine 18, glutamate 37, glutamine 45, tyrosine 50, valine 92, phenylalanine 127, aspartate 290, and serine 331.

Belongs to the ferredoxin--NADP reductase type 2 family. Homodimer. Requires FAD as cofactor.

It carries out the reaction 2 reduced [2Fe-2S]-[ferredoxin] + NADP(+) + H(+) = 2 oxidized [2Fe-2S]-[ferredoxin] + NADPH. The polypeptide is Ferredoxin--NADP reductase (Symbiobacterium thermophilum (strain DSM 24528 / JCM 14929 / IAM 14863 / T)).